The sequence spans 473 residues: Ribulose bisphosphate carboxylase large chain (473 aa).

A propeptide spanning residues 1–2 (MS) is cleaved from the precursor. At P3 the chain carries N-acetylproline. K14 is modified (N6,N6,N6-trimethyllysine). Substrate-binding residues include N123 and T173. The Proton acceptor role is filled by K175. Residue K177 coordinates substrate. Residues K201, D203, and E204 each contribute to the Mg(2+) site. K201 carries the N6-carboxylysine modification. The active-site Proton acceptor is H294. Positions 295, 327, and 379 each coordinate substrate.

Belongs to the RuBisCO large chain family. Type I subfamily. In terms of assembly, heterohexadecamer of 8 large chains and 8 small chains; disulfide-linked. The disulfide link is formed within the large subunit homodimers. It depends on Mg(2+) as a cofactor. The disulfide bond which can form in the large chain dimeric partners within the hexadecamer appears to be associated with oxidative stress and protein turnover.

It is found in the plastid. Its subcellular location is the chloroplast. It carries out the reaction 2 (2R)-3-phosphoglycerate + 2 H(+) = D-ribulose 1,5-bisphosphate + CO2 + H2O. It catalyses the reaction D-ribulose 1,5-bisphosphate + O2 = 2-phosphoglycolate + (2R)-3-phosphoglycerate + 2 H(+). In terms of biological role, ruBisCO catalyzes two reactions: the carboxylation of D-ribulose 1,5-bisphosphate, the primary event in carbon dioxide fixation, as well as the oxidative fragmentation of the pentose substrate in the photorespiration process. Both reactions occur simultaneously and in competition at the same active site. This is Ribulose bisphosphate carboxylase large chain from Sesbania sesban (Egyptian riverhemp).